The primary structure comprises 292 residues: Pyridoxal 5'-phosphate synthase subunit PdxS (292 aa).

Asp22 is a D-ribose 5-phosphate binding site. Lys79 (schiff-base intermediate with D-ribose 5-phosphate) is an active-site residue. D-ribose 5-phosphate is bound at residue Gly151. A D-glyceraldehyde 3-phosphate-binding site is contributed by Arg163. D-ribose 5-phosphate-binding positions include Gly212 and 233–234 (GS).

Belongs to the PdxS/SNZ family. In terms of assembly, in the presence of PdxT, forms a dodecamer of heterodimers.

The catalysed reaction is aldehydo-D-ribose 5-phosphate + D-glyceraldehyde 3-phosphate + L-glutamine = pyridoxal 5'-phosphate + L-glutamate + phosphate + 3 H2O + H(+). Its pathway is cofactor biosynthesis; pyridoxal 5'-phosphate biosynthesis. Its function is as follows. Catalyzes the formation of pyridoxal 5'-phosphate from ribose 5-phosphate (RBP), glyceraldehyde 3-phosphate (G3P) and ammonia. The ammonia is provided by the PdxT subunit. Can also use ribulose 5-phosphate and dihydroxyacetone phosphate as substrates, resulting from enzyme-catalyzed isomerization of RBP and G3P, respectively. This is Pyridoxal 5'-phosphate synthase subunit PdxS from Thermoanaerobacter pseudethanolicus (strain ATCC 33223 / 39E) (Clostridium thermohydrosulfuricum).